The sequence spans 126 residues: uncharacterized protein (126 aa).

The tract at residues 83–126 (VPPPLDRSHESPEEFFPPQNRNRGGGPKAQIQRHPPEALEKTTH) is disordered. The segment covering 116 to 126 (HPPEALEKTTH) has biased composition (basic and acidic residues).

This is an uncharacterized protein from Galliformes (FAdV-1).